Consider the following 539-residue polypeptide: Lysophospholipid acyltransferase LPEAT2 (539 aa).

A helical transmembrane segment spans residues 93 to 113; it reads LVICLPIALIRLVLFAASLAV. The HXXXXD motif signature appears at 178–183; the sequence is HVSYIE. EF-hand domains follow at residues 426–455, 457–492, and 493–528; these read KRIF…VLTQ, LFKQ…TIPN, and LNKD…NPLL. The Ca(2+) site is built by D470, D472, D474, Y476, E481, D506, D508, D510, R512, and D517.

The protein belongs to the 1-acyl-sn-glycerol-3-phosphate acyltransferase family.

The protein localises to the golgi apparatus membrane. Its subcellular location is the late endosome membrane. It catalyses the reaction a 1-acyl-sn-glycero-3-phosphoethanolamine + an acyl-CoA = a 1,2-diacyl-sn-glycero-3-phosphoethanolamine + CoA. The enzyme catalyses a 1-acyl-sn-glycero-3-phosphocholine + an acyl-CoA = a 1,2-diacyl-sn-glycero-3-phosphocholine + CoA. It carries out the reaction a 1-acyl-sn-glycero-3-phospho-L-serine + an acyl-CoA = a 1,2-diacyl-sn-glycero-3-phospho-L-serine + CoA. It participates in lipid metabolism; phospholipid metabolism. Its function is as follows. Possesses acyl-CoA-dependent lysophospholipid acyltransferase activity with a subset of lysophospholipids as substrates. Exhibits strong acylation activity on lysophosphatidylethanolamine (LPE), and lower activity on lysophosphatidylcholine (LPC) and lysophosphatidylserine (LPS). Exhibits acylation activity on both LPE and LPC. Has a preference for 18:1-LPE over 16:0-LPE as acceptor. Palmitoyl-CoA (16:0-CoA) is a better acyl donor than oleoyl-CoA (18:1-CoA). Among several different acyl-CoA species the best acyl donor is eicosanoyl-CoA (20:0-CoA). Activity is calcium-independent. Its activity is essential for maintaining adequate levels of phosphatidylethanolamine (PE), LPE and LPC in the cells, which is crucial for plant growth regulation. This Arabidopsis thaliana (Mouse-ear cress) protein is Lysophospholipid acyltransferase LPEAT2.